The chain runs to 488 residues: Probable glycine dehydrogenase (decarboxylating) subunit 2 (488 aa).

Residue Lys274 is modified to N6-(pyridoxal phosphate)lysine.

This sequence belongs to the GcvP family. C-terminal subunit subfamily. As to quaternary structure, the glycine cleavage system is composed of four proteins: P, T, L and H. In this organism, the P 'protein' is a heterodimer of two subunits. It depends on pyridoxal 5'-phosphate as a cofactor.

The catalysed reaction is N(6)-[(R)-lipoyl]-L-lysyl-[glycine-cleavage complex H protein] + glycine + H(+) = N(6)-[(R)-S(8)-aminomethyldihydrolipoyl]-L-lysyl-[glycine-cleavage complex H protein] + CO2. In terms of biological role, the glycine cleavage system catalyzes the degradation of glycine. The P protein binds the alpha-amino group of glycine through its pyridoxal phosphate cofactor; CO(2) is released and the remaining methylamine moiety is then transferred to the lipoamide cofactor of the H protein. This Listeria monocytogenes serotype 4b (strain F2365) protein is Probable glycine dehydrogenase (decarboxylating) subunit 2.